The primary structure comprises 494 residues: NAD(+) hydrolase ThsA (494 aa).

Positions Ala-11–Lys-295 constitute a Deacetylase sirtuin-type domain. Residues Ala-30, Asp-119, and His-157 each contribute to the NAD(+) site. His-157 (proton acceptor) is an active-site residue. The tract at residues Ile-296–Arg-494 is SLOG (STALD) domain, binds 3'cADPR. 3'cADPR is bound by residues Gly-300, Ser-301, Leu-339, Phe-370, Arg-388, Lys-405, Gly-416, and Glu-420.

Belongs to the soluble Thoeris ThsA family. Homotetramer.

The protein localises to the cytoplasm. The catalysed reaction is NAD(+) + H2O = ADP-D-ribose + nicotinamide + H(+). With respect to regulation, probably activated by a signal molecule generated by endogenous ThsB1 and/or ThsB2. Can also be activated by the signal generated by ThsB of B.cereus. The activating molecule might be 3' cyclic ADP-D-ribose (3'cADPR). Probable NAD(+) hydrolyzing component (NADase) of the Thoeris antiviral defense system, composed of ThsA, TIR1 (thsB1) and TIR2 (thsB2). Activated by a signal molecule generated by endogenous TIR1, TIR2 or ThsB from B.cereus. After activation it binds and hydrolyzes NAD(+), leading to cell death and inhibition of phage replication. Expression of Thoeris in B.subtilis (strain BEST7003) confers resistance to phages phi29, phi3T, SPBeta, SBSphi11, SBSphi13, SBSphiJ, SPO1 and SPR but not SBSphiC. The TIR paralogs confer overlapping resistance to different phages. The protein is NAD(+) hydrolase ThsA of Cytobacillus dafuensis (Bacillus dafuensis).